The primary structure comprises 611 residues: MAASKPIEAAMAAAAAPGSGNGVGGGGGTAGPGSGAGTLPRWHVALAIGAPLLLGAGAMYLWSRRRRRREAGGRGDASGLKRNSERKTPEGRASPALGSGHHDGSGDSLEMSSLDRAQAAKNKGNKYFKAGKYEQAIQCYTEAISLCPTEKNVDLSTFYQNRAAAFEQLQKWKEVAQDCTKAVELNPKYVKALFRRAKAHEKLDNKKECLEDVTAVCILEGFQNEQSMLLADKVLKLLGKENAKEKYKNREPLMPSPQFIKSYFSSFTDDIISQPMLKGEKSDEDKDKEGEALEVKENSGYLKAKQYMEEENYDKIISECSKEIDAQGKYMAEALLLRATFYLLIGSANAAKPDLDKVISLKEANVKLRANALIKRGTMCMQQQQPMLSTQDFNMAAEIDPMNSDVYHHRGQLKILLDLVEEAVADFDACIRLRPKFALAQAQKCFALYRQAYTANNSSQVQAAMKGFEEIIKKFPRCAEGYALYAQALTDQQQFGKADEMYDKCIDLEPDNATTYVHKGLLQLQWKQDLDKGLELISKAIEIDNKCDFAYETMGTIEVQRGNMEKAIDMFNKAINLAKSEMEMAHLYSLCDAAHAQTEVAKKYGLKPPTL.

Ala2 is subject to N-acetylalanine. Residues Ala2–Arg41 are Mitochondrial intermembrane-facing. A helical membrane pass occupies residues Trp42–Trp62. The Cytoplasmic portion of the chain corresponds to Ser63 to Leu611. The interval Arg69–Glu110 is disordered. At Arg74 the chain carries Omega-N-methylarginine. 5 positions are modified to phosphoserine: Ser94, Ser99, Ser105, Ser108, and Ser113. 2 TPR repeats span residues Ala117 to Glu150 and Ser156 to Tyr189. The residue at position 188 (Lys188) is an N6-acetyllysine. Lys278 participates in a covalent cross-link: Glycyl lysine isopeptide (Lys-Gly) (interchain with G-Cter in SUMO2). TPR repeat units follow at residues Glu297–Tyr330, Ala332–Asn365, Ala370–Asn403, Ser404–Phe437, Cys445–Cys478, Ala479–Asn512, Thr514–Cys547, and Asp548–Glu581.

The protein belongs to the Tom70 family. Forms part of the preprotein translocase complex of the outer mitochondrial membrane (TOM complex) which consists of at least 7 different proteins (TOMM5, TOMM6, TOMM7, TOMM20, TOMM22, TOMM40 and TOMM70). Interacts with CAPN8. Interacts with TRADD, TRAF6 and STING. Interacts with MAVS. Interacts with HSPA8 and HSP90AA1; both interactions are required for preprotein mitochondrial import. The interaction with HSP90AA1 is direct and mediates the association of TOMM70 with IRF3 and TBK1. Upon mitochondrial depolarization, interacts with PINK1; the interaction is required for PINK1-TOM-TIM23 supercomplex formation which is critical for PINK1 stabilization at the outer mitochondrial membrane, kinase activation and downstream mitophagy. Expressed in the base region of the oxyntic and pyloric mucosae.

It is found in the mitochondrion outer membrane. Functionally, acts as a receptor of the preprotein translocase complex of the outer mitochondrial membrane (TOM complex). Recognizes and mediates the translocation of mitochondrial preproteins from the cytosol into the mitochondria in a chaperone dependent manner. Mediates TBK1 and IRF3 activation induced by MAVS in response to virus infection and promotes host antiviral responses during virus infection. The polypeptide is Mitochondrial import receptor subunit TOM70 (Mus musculus (Mouse)).